A 316-amino-acid chain; its full sequence is Methionyl-tRNA formyltransferase (316 aa).

112 to 115 (SLLP) lines the (6S)-5,6,7,8-tetrahydrofolate pocket.

The protein belongs to the Fmt family.

It carries out the reaction L-methionyl-tRNA(fMet) + (6R)-10-formyltetrahydrofolate = N-formyl-L-methionyl-tRNA(fMet) + (6S)-5,6,7,8-tetrahydrofolate + H(+). In terms of biological role, attaches a formyl group to the free amino group of methionyl-tRNA(fMet). The formyl group appears to play a dual role in the initiator identity of N-formylmethionyl-tRNA by promoting its recognition by IF2 and preventing the misappropriation of this tRNA by the elongation apparatus. The polypeptide is Methionyl-tRNA formyltransferase (Psychromonas ingrahamii (strain DSM 17664 / CCUG 51855 / 37)).